Consider the following 266-residue polypeptide: Dihydropteroate synthase (266 aa).

A Pterin-binding domain is found at 12-260; the sequence is AAIMGILNVT…DVKANQEIVA (249 aa). Asparagine 19 provides a ligand contact to Mg(2+). (7,8-dihydropterin-6-yl)methyl diphosphate-binding positions include threonine 59, aspartate 93, asparagine 112, aspartate 176, lysine 212, and 248 to 250; that span reads RVH.

It belongs to the DHPS family. In terms of assembly, homodimer or homotrimer. Requires Mg(2+) as cofactor.

It catalyses the reaction (7,8-dihydropterin-6-yl)methyl diphosphate + 4-aminobenzoate = 7,8-dihydropteroate + diphosphate. Its pathway is cofactor biosynthesis; tetrahydrofolate biosynthesis; 7,8-dihydrofolate from 2-amino-4-hydroxy-6-hydroxymethyl-7,8-dihydropteridine diphosphate and 4-aminobenzoate: step 1/2. In terms of biological role, catalyzes the condensation of para-aminobenzoate (pABA) with 6-hydroxymethyl-7,8-dihydropterin diphosphate (DHPt-PP) to form 7,8-dihydropteroate (H2Pte), the immediate precursor of folate derivatives. This chain is Dihydropteroate synthase (folP), found in Streptococcus pyogenes.